The following is a 307-amino-acid chain: Protease HtpX homolog (307 aa).

2 helical membrane-spanning segments follow: residues 7-27 and 28-48; these read AILL…IGGA and SGAT…YWNS. H130 provides a ligand contact to Zn(2+). E131 is an active-site residue. H134 is a Zn(2+) binding site. Helical transmembrane passes span 145–165 and 171–191; these read ITAT…FFGG and GPGI…AMLV. E200 serves as a coordination point for Zn(2+). The tract at residues 277–307 is disordered; sequence AGQSGGGLAPGGPPPDPSSPWNKGSRRGPWG.

The protein belongs to the peptidase M48B family. Zn(2+) is required as a cofactor.

It localises to the cell inner membrane. This is Protease HtpX homolog from Nitrobacter winogradskyi (strain ATCC 25391 / DSM 10237 / CIP 104748 / NCIMB 11846 / Nb-255).